We begin with the raw amino-acid sequence, 170 residues long: Crossover junction endodeoxyribonuclease RuvC (170 aa).

Residues aspartate 11, glutamate 71, and aspartate 143 contribute to the active site. Mg(2+) contacts are provided by aspartate 11, glutamate 71, and aspartate 143.

Belongs to the RuvC family. In terms of assembly, homodimer which binds Holliday junction (HJ) DNA. The HJ becomes 2-fold symmetrical on binding to RuvC with unstacked arms; it has a different conformation from HJ DNA in complex with RuvA. In the full resolvosome a probable DNA-RuvA(4)-RuvB(12)-RuvC(2) complex forms which resolves the HJ. Requires Mg(2+) as cofactor.

The protein resides in the cytoplasm. It carries out the reaction Endonucleolytic cleavage at a junction such as a reciprocal single-stranded crossover between two homologous DNA duplexes (Holliday junction).. The RuvA-RuvB-RuvC complex processes Holliday junction (HJ) DNA during genetic recombination and DNA repair. Endonuclease that resolves HJ intermediates. Cleaves cruciform DNA by making single-stranded nicks across the HJ at symmetrical positions within the homologous arms, yielding a 5'-phosphate and a 3'-hydroxyl group; requires a central core of homology in the junction. The consensus cleavage sequence is 5'-(A/T)TT(C/G)-3'. Cleavage occurs on the 3'-side of the TT dinucleotide at the point of strand exchange. HJ branch migration catalyzed by RuvA-RuvB allows RuvC to scan DNA until it finds its consensus sequence, where it cleaves and resolves the cruciform DNA. The sequence is that of Crossover junction endodeoxyribonuclease RuvC from Rhizobium meliloti (strain 1021) (Ensifer meliloti).